A 257-amino-acid polypeptide reads, in one-letter code: Pyrroline-5-carboxylate reductase (257 aa).

The protein belongs to the pyrroline-5-carboxylate reductase family.

It is found in the cytoplasm. It catalyses the reaction L-proline + NADP(+) = (S)-1-pyrroline-5-carboxylate + NADPH + 2 H(+). The catalysed reaction is L-proline + NAD(+) = (S)-1-pyrroline-5-carboxylate + NADH + 2 H(+). The protein operates within amino-acid biosynthesis; L-proline biosynthesis; L-proline from L-glutamate 5-semialdehyde: step 1/1. In terms of biological role, catalyzes the reduction of 1-pyrroline-5-carboxylate (PCA) to L-proline. The protein is Pyrroline-5-carboxylate reductase of Helicobacter pylori (strain J99 / ATCC 700824) (Campylobacter pylori J99).